We begin with the raw amino-acid sequence, 164 residues long: MAVVTLIPTLARVLSKHSLLSPLLSVTSFRRFYRGDSPTDSQKDMIEIPLPPWQERTDESIETKRARLLYESRKRGMLENCILLSLFAKEYLHNMTEKQLNLYDRLINEPSNDWDIYYWATEAKPAPEIFENEVMELLREFTKNKNKEQRLRAPDLEYLFEKPR.

Residues 1–27 (MAVVTLIPTLARVLSKHSLLSPLLSVT) constitute a mitochondrion transit peptide.

This sequence belongs to the SDHAF2 family. Interacts with SDHA within the SDH catalytic dimer.

It localises to the mitochondrion matrix. In terms of biological role, plays an essential role in the assembly of succinate dehydrogenase (SDH), an enzyme complex (also referred to as respiratory complex II) that is a component of both the tricarboxylic acid (TCA) cycle and the mitochondrial electron transport chain, and which couples the oxidation of succinate to fumarate with the reduction of ubiquinone (coenzyme Q) to ubiquinol. Required for flavinylation (covalent attachment of FAD) of the flavoprotein subunit SDHA of the SDH catalytic dimer. This Rattus norvegicus (Rat) protein is Succinate dehydrogenase assembly factor 2, mitochondrial.